The primary structure comprises 374 residues: UDP-N-acetylglucosamine--N-acetylmuramyl-(pentapeptide) pyrophosphoryl-undecaprenol N-acetylglucosamine transferase (374 aa).

UDP-N-acetyl-alpha-D-glucosamine-binding positions include 13-15, Asn124, Arg165, Ser193, and Gln294; that span reads TGG.

This sequence belongs to the glycosyltransferase 28 family. MurG subfamily.

The protein localises to the cell inner membrane. It catalyses the reaction di-trans,octa-cis-undecaprenyl diphospho-N-acetyl-alpha-D-muramoyl-L-alanyl-D-glutamyl-meso-2,6-diaminopimeloyl-D-alanyl-D-alanine + UDP-N-acetyl-alpha-D-glucosamine = di-trans,octa-cis-undecaprenyl diphospho-[N-acetyl-alpha-D-glucosaminyl-(1-&gt;4)]-N-acetyl-alpha-D-muramoyl-L-alanyl-D-glutamyl-meso-2,6-diaminopimeloyl-D-alanyl-D-alanine + UDP + H(+). It functions in the pathway cell wall biogenesis; peptidoglycan biosynthesis. Cell wall formation. Catalyzes the transfer of a GlcNAc subunit on undecaprenyl-pyrophosphoryl-MurNAc-pentapeptide (lipid intermediate I) to form undecaprenyl-pyrophosphoryl-MurNAc-(pentapeptide)GlcNAc (lipid intermediate II). This chain is UDP-N-acetylglucosamine--N-acetylmuramyl-(pentapeptide) pyrophosphoryl-undecaprenol N-acetylglucosamine transferase, found in Rhizobium etli (strain CIAT 652).